A 147-amino-acid chain; its full sequence is UPF0306 protein KPK_0562 (147 aa).

The protein belongs to the UPF0306 family.

The polypeptide is UPF0306 protein KPK_0562 (Klebsiella pneumoniae (strain 342)).